We begin with the raw amino-acid sequence, 299 residues long: Ankyrin repeat domain-containing protein 54 (299 aa).

Residues 1–27 (MAATGGGAEDESRSGRSSSEGECAVAP) form a disordered region. At Ala-2 the chain carries N-acetylalanine. The residue at position 62 (Ser-62) is a Phosphoserine. The Nuclear localization signal (NLS) motif lies at 98–116 (RRLGPTGKEVHALKRLRDS). ANK repeat units follow at residues 108-137 (HALKRLRDSANANDIETVQQLLEDGADPCA), 141-170 (KGRTALHFASCNGNDQIVQLLLDHGADPNQ), 174-203 (LGNTPLHLAACTNHVPVITTLLRGGARVDA), and 207-239 (AGRTPLHLAKSKLNILQEGHSQCLEAVRLEVKQ). The tract at residues 140-240 (DKGRTALHFA…EAVRLEVKQI (101 aa)) is LYN-binding. The Nuclear export signal (NES) motif lies at 282–292 (LLASFTSLSLQ).

As to quaternary structure, interacts (via ankyrin repeat region) with LYN (via SH3-domain) in an activation-independent status of LYN. Forms a multiprotein complex with LYN and HCLS1. Interacts with TSN2, VAV1, DBNL and LASP1.

It is found in the nucleus. The protein localises to the cytoplasm. Its subcellular location is the midbody. In terms of biological role, plays an important role in regulating intracellular signaling events associated with erythroid terminal differentiation. In Rattus norvegicus (Rat), this protein is Ankyrin repeat domain-containing protein 54 (Ankrd54).